The following is a 184-amino-acid chain: UPF0397 protein SAOUHSC_03020 (184 aa).

Helical transmembrane passes span 11-31 (VVAI…VVIP), 44-64 (AFLA…TGLV), 77-97 (AWWS…WIGL), 116-136 (IGQI…LDIL), and 148-168 (QGVI…TILL).

Belongs to the UPF0397 family.

The protein resides in the cell membrane. In Staphylococcus aureus (strain NCTC 8325 / PS 47), this protein is UPF0397 protein SAOUHSC_03020.